The chain runs to 526 residues: NAD(P)H-quinone oxidoreductase subunit 2 (526 aa).

14 helical membrane passes run 16 to 36 (ILPE…DLIV), 43 to 63 (WIPY…YLGW), 80 to 100 (LSIL…MMSV), 107 to 127 (GTAL…GMFL), 133 to 153 (LVMI…LTGY), 168 to 188 (LLIG…LYGL), 211 to 231 (LALA…ISAV), 245 to 265 (PTPV…ALAI), 279 to 299 (WHFI…VVAL), 307 to 327 (MLAY…VAGT), 335 to 355 (IFYL…VILF), 379 to 399 (LGLS…GFFG), 401 to 421 (IYLF…LGLI), and 469 to 489 (LVLS…LFVI).

It belongs to the complex I subunit 2 family. In terms of assembly, NDH-1 can be composed of about 15 different subunits; different subcomplexes with different compositions have been identified which probably have different functions.

It is found in the cellular thylakoid membrane. The enzyme catalyses a plastoquinone + NADH + (n+1) H(+)(in) = a plastoquinol + NAD(+) + n H(+)(out). The catalysed reaction is a plastoquinone + NADPH + (n+1) H(+)(in) = a plastoquinol + NADP(+) + n H(+)(out). Functionally, NDH-1 shuttles electrons from an unknown electron donor, via FMN and iron-sulfur (Fe-S) centers, to quinones in the respiratory and/or the photosynthetic chain. The immediate electron acceptor for the enzyme in this species is believed to be plastoquinone. Couples the redox reaction to proton translocation, and thus conserves the redox energy in a proton gradient. Cyanobacterial NDH-1 also plays a role in inorganic carbon-concentration. The sequence is that of NAD(P)H-quinone oxidoreductase subunit 2 from Picosynechococcus sp. (strain ATCC 27264 / PCC 7002 / PR-6) (Agmenellum quadruplicatum).